The chain runs to 193 residues: uncharacterized protein (193 aa).

The signal sequence occupies residues 1-26 (MRNVFVGALCMCGMSFVFSDSVRSAA).

This is an uncharacterized protein from Treponema pallidum (strain Nichols).